A 906-amino-acid chain; its full sequence is Aconitate hydratase A (906 aa).

Positions 443, 509, and 512 each coordinate [4Fe-4S] cluster.

Belongs to the aconitase/IPM isomerase family. As to quaternary structure, monomer. The cofactor is [4Fe-4S] cluster.

The enzyme catalyses citrate = D-threo-isocitrate. The catalysed reaction is (2S,3R)-3-hydroxybutane-1,2,3-tricarboxylate = 2-methyl-cis-aconitate + H2O. It participates in carbohydrate metabolism; tricarboxylic acid cycle; isocitrate from oxaloacetate: step 2/2. Its pathway is organic acid metabolism; propanoate degradation. In terms of biological role, involved in the catabolism of short chain fatty acids (SCFA) via the tricarboxylic acid (TCA)(acetyl degradation route) and probably via the 2-methylcitrate cycle I (propionate degradation route). Catalyzes the reversible isomerization of citrate to isocitrate via cis-aconitate. Could catalyze the hydration of 2-methyl-cis-aconitate to yield (2R,3S)-2-methylisocitrate. The apo form of AcnA functions as a RNA-binding regulatory protein. This Bradyrhizobium diazoefficiens (strain JCM 10833 / BCRC 13528 / IAM 13628 / NBRC 14792 / USDA 110) protein is Aconitate hydratase A.